Here is a 151-residue protein sequence, read N- to C-terminus: Protein Smg homolog (151 aa).

Belongs to the Smg family.

The polypeptide is Protein Smg homolog (Laribacter hongkongensis (strain HLHK9)).